The primary structure comprises 178 residues: Signal peptidase complex subunit 2 (178 aa).

The Cytoplasmic segment spans residues 1–37; that stretch reads MSSAKPINVYSIPELNQALDEALPSVFARLNYERSYA. Residues 38-58 form a helical membrane-spanning segment; it reads LLDAKLYIGYSIAVVAGLSFF. Over 59–67 the chain is Lumenal; it reads LDKKFERDQ. Residues 68–88 form a helical membrane-spanning segment; it reads IVTYQKLLVGAYFVLSLLFWY. Residues 89–178 lie on the Cytoplasmic side of the membrane; sequence FSRFIEKGTV…HNVLDTKKNE (90 aa).

Belongs to the SPCS2 family. In terms of assembly, component of the signal peptidase complex (SPC) composed of a catalytic subunit SEC11 and three accessory subunits SPC1, SPC2 and SPC3. The complex induces a local thinning of the ER membrane which is used to measure the length of the signal peptide (SP) h-region of protein substrates. This ensures the selectivity of the complex towards h-regions shorter than 18-20 amino acids. SPC associates with the translocon complex. Interacts with SBH1 and SEB2/SBH2.

The protein localises to the endoplasmic reticulum membrane. Functionally, component of the signal peptidase complex (SPC) which catalyzes the cleavage of N-terminal signal sequences from nascent proteins as they are translocated into the lumen of the endoplasmic reticulum. Enhances the enzymatic activity of SPC and facilitates the interactions between different components of the translocation site. The protein is Signal peptidase complex subunit 2 (SPC2) of Saccharomyces cerevisiae (strain ATCC 204508 / S288c) (Baker's yeast).